Reading from the N-terminus, the 1645-residue chain is Thrombospondin type-1 domain-containing protein 7A (1645 aa).

A signal peptide spans 1 to 38; the sequence is MGLRAGRLASPSRGVLQLLRLPLLLLLLLSSGARGAAA. Over 39–1595 the chain is Extracellular; sequence QGDTEVPTLY…FGPDGRLKTW (1557 aa). TSP type-1 domains lie at 46–105, 109–181, and 183–236; these read TLYL…KVCD, ELYD…IPCQ, and DCIV…NPCE. Asn223 carries N-linked (GlcNAc...) asparagine glycosylation. A disordered region spans residues 255-300; that stretch reads PHTRQARQARRRGKNKEREKERGKAVKDPEARELIKKKRNRNRQNR. Residues 256-304 are a coiled coil; the sequence is HTRQARQARRRGKNKEREKERGKAVKDPEARELIKKKRNRNRQNRQENR. Over residues 258–269 the composition is skewed to basic residues; that stretch reads RQARQARRRGKN. The span at 270–288 shows a compositional bias: basic and acidic residues; the sequence is KEREKERGKAVKDPEAREL. Residues 289-298 show a composition bias toward basic residues; it reads IKKKRNRNRQ. Asn321 carries an N-linked (GlcNAc...) asparagine glycan. 16 TSP type-1 domains span residues 349–405, 412–499, 501–563, 623–684, 685–758, 760–820, 821–893, 895–948, 949–1022, 1024–1084, 1085–1152, 1154–1208, 1209–1272, 1274–1329, 1330–1400, and 1402–1463; these read ECQV…VSQG, ATYG…VPCP, ECEV…PSCY, DCVL…HPCT, VYHW…LPCR, DCVV…PTCH, SYRW…IPCQ, DCQF…CPCD, KYNA…IPCP, DCKL…SDCN, QYIW…LPCP, DCVI…KNCY, HYDY…VECP, NCQL…KPCY, RWQY…QPCP, and DCYL…GQCY. Intrachain disulfides connect Cys424/Cys494, Cys444/Cys498, and Cys455/Cys483. Asn439 carries an N-linked (GlcNAc...) asparagine glycan. Residue Asn489 is glycosylated (N-linked (GlcNAc...) asparagine). 2 cysteine pairs are disulfide-bonded: Cys624/Cys666 and Cys635/Cys639. N-linked (GlcNAc...) asparagine glycosylation is present at Asn668. 7 disulfides stabilise this stretch: Cys678–Cys683, Cys696–Cys753, Cys717–Cys757, Cys728–Cys741, Cys761–Cys803, Cys772–Cys776, and Cys813–Cys819. N-linked (GlcNAc...) asparagine glycosylation occurs at Asn706. Asn957 is a glycosylation site (N-linked (GlcNAc...) asparagine). Disulfide bonds link Cys961/Cys1017, Cys983/Cys1021, Cys994/Cys1007, Cys1025/Cys1062, Cys1036/Cys1040, and Cys1079/Cys1083. Asn1032 carries N-linked (GlcNAc...) asparagine glycosylation. A disulfide bridge connects residues Cys1201 and Cys1207. An N-linked (GlcNAc...) asparagine glycan is attached at Asn1213. 12 cysteine pairs are disulfide-bonded: Cys1220/Cys1267, Cys1228/Cys1271, Cys1239/Cys1252, Cys1275/Cys1313, Cys1286/Cys1290, Cys1323/Cys1328, Cys1339/Cys1395, Cys1346/Cys1399, Cys1357/Cys1376, Cys1403/Cys1447, Cys1414/Cys1418, and Cys1457/Cys1462. An N-linked (GlcNAc...) asparagine glycan is attached at Asn1264. Asn1354 carries N-linked (GlcNAc...) asparagine glycosylation. 2 N-linked (GlcNAc...) asparagine glycosylation sites follow: Asn1488 and Asn1535. Residues 1596 to 1616 form a helical membrane-spanning segment; it reads VYGVAAGAFVLLVFIVSMIYL. At 1617–1645 the chain is on the cytoplasmic side; the sequence is ACKKPKKPQRRQNNRLKPLTLAYDGDADM.

Proteolytic cleavage in the extracellular region generates a 210 kDa soluble form. In terms of processing, extensively N-glycosylated. Detected on kidney podocytes along the glomerular capillary wall (at protein level).

It localises to the cell membrane. The protein localises to the cell projection. Its subcellular location is the secreted. Plays a role in actin cytoskeleton rearrangement. Its function is as follows. The soluble form promotes endothelial cell migration and filopodia formation during sprouting angiogenesis via a FAK-dependent mechanism. The sequence is that of Thrombospondin type-1 domain-containing protein 7A (Thsd7a) from Mus musculus (Mouse).